A 549-amino-acid polypeptide reads, in one-letter code: DNA polymerase lambda (549 aa).

In terms of domain architecture, BRCT spans aspartate 17 to isoleucine 116. The disordered stretch occupies residues lysine 126–alanine 197. Positions proline 149–valine 175 are enriched in basic and acidic residues. Residues serine 180 to alanine 197 show a composition bias toward polar residues. The segment at asparagine 233 to tyrosine 247 is DNA-binding. Residue histidine 280 is part of the active site. The tract at residues glycine 315 to threonine 318 is DNA-binding. Residues arginine 356, serine 387–arginine 390, and glycine 396–aspartate 399 contribute to the dCTP site. Residues arginine 390–aspartate 399 form an involved in primer binding region. Mn(2+)-binding residues include aspartate 397, aspartate 399, and aspartate 464. The DNA-binding stretch occupies residues isoleucine 438 to alanine 479. A dCTP-binding site is contributed by asparagine 487.

It belongs to the DNA polymerase type-X family. Interacts with PCNA. Mn(2+) serves as cofactor. As to expression, expressed in proliferating tissues. Expressed in roots, root apex, young leaves, shoot apical meristem (SAM), flag leaves and panicles.

It is found in the nucleus. It catalyses the reaction DNA(n) + a 2'-deoxyribonucleoside 5'-triphosphate = DNA(n+1) + diphosphate. Repair polymerase involved in base excision repair (BER) and responsible for repair of lesions that give rise to abasic (AP) sites in DNA. Has both DNA polymerase and terminal transferase activities. Has a 5'-deoxyribose-5-phosphate lyase (dRP lyase) activity. The protein is DNA polymerase lambda of Oryza sativa subsp. japonica (Rice).